A 218-amino-acid chain; its full sequence is Glycerol-3-phosphate acyltransferase 2 (218 aa).

5 helical membrane-spanning segments follow: residues 6-26 (YLLIFILAYLIGSFPTGVLVG), 50-70 (VMGPVAGSAVLVIDVLKGTLA), 85-105 (LLLIAGACAILGHTFSIFLKF), 115-135 (AGVFLGYNLKFFGLCALVFLP), and 159-179 (FWFHDIFLTIITGIMMILLFV).

The protein belongs to the PlsY family. As to quaternary structure, probably interacts with PlsX.

The protein resides in the cell membrane. It carries out the reaction an acyl phosphate + sn-glycerol 3-phosphate = a 1-acyl-sn-glycero-3-phosphate + phosphate. Its pathway is lipid metabolism; phospholipid metabolism. Functionally, catalyzes the transfer of an acyl group from acyl-phosphate (acyl-PO(4)) to glycerol-3-phosphate (G3P) to form lysophosphatidic acid (LPA). This enzyme utilizes acyl-phosphate as fatty acyl donor, but not acyl-CoA or acyl-ACP. The sequence is that of Glycerol-3-phosphate acyltransferase 2 from Lactobacillus johnsonii (strain CNCM I-12250 / La1 / NCC 533).